Reading from the N-terminus, the 171-residue chain is Co-chaperone protein HscB homolog (171 aa).

The 73-residue stretch at 3–75 (SHFALFDLEP…SQRARYLLSL (73 aa)) folds into the J domain.

Belongs to the HscB family. As to quaternary structure, interacts with HscA and stimulates its ATPase activity.

In terms of biological role, co-chaperone involved in the maturation of iron-sulfur cluster-containing proteins. Seems to help targeting proteins to be folded toward HscA. The sequence is that of Co-chaperone protein HscB homolog from Azotobacter vinelandii.